The primary structure comprises 312 residues: Olfactory receptor 7D2 (312 aa).

The Extracellular segment spans residues 1–25 (MEAGNQTGFLEFILLGLSEDPELQP). Residue N5 is glycosylated (N-linked (GlcNAc...) asparagine). Residues 26 to 46 (FIFGLFLSMYLVTVLGNLLII) form a helical membrane-spanning segment. Topologically, residues 47–54 (LAISSDSH) are cytoplasmic. Residues 55-75 (LHTPMYFFLSNLSWVDICFST) traverse the membrane as a helical segment. At 76–99 (CIVPKMLVNIQTENKAISYMDCLT) the chain is on the extracellular side. Cysteines 97 and 189 form a disulfide. A helical transmembrane segment spans residues 100 to 120 (QVYFSMFFPILDTLLLTVMAY). The Cytoplasmic portion of the chain corresponds to 121–139 (DRFVAVCHPLHYMIIMNPH). A helical transmembrane segment spans residues 140-160 (LCGLLVFVTWLIGVMTSLLHI). The Extracellular segment spans residues 161 to 197 (SLMMHLIFCKDFEIPHFFCELTYILQLACSDTFLNST). The chain crosses the membrane as a helical span at residues 198–217 (LIYFMTGVLGVFPLLGIIFS). The Cytoplasmic portion of the chain corresponds to 218–237 (YSRIASSIRKMSSSGGKQKA). The chain crosses the membrane as a helical span at residues 238-258 (LSTCGSHLSVVSLFYGTGIGV). The Extracellular segment spans residues 259–271 (HFTSAVTHSSQKI). The chain crosses the membrane as a helical span at residues 272 to 292 (SVASVMYTVVTPMLNPFIYSL). The Cytoplasmic portion of the chain corresponds to 293 to 312 (RNKDVKGALGSLLSRAASCL).

Belongs to the G-protein coupled receptor 1 family.

Its subcellular location is the cell membrane. Odorant receptor. The chain is Olfactory receptor 7D2 (OR7D2) from Homo sapiens (Human).